Reading from the N-terminus, the 198-residue chain is Recombination protein RecR (198 aa).

Residues 58-73 (CSVCGNYTDTDPCAIC) form a C4-type zinc finger. Positions 81–175 (SLVCVVEEPK…KVTRIAHGIP (95 aa)) constitute a Toprim domain.

The protein belongs to the RecR family.

May play a role in DNA repair. It seems to be involved in an RecBC-independent recombinational process of DNA repair. It may act with RecF and RecO. This is Recombination protein RecR from Clostridium acetobutylicum (strain ATCC 824 / DSM 792 / JCM 1419 / IAM 19013 / LMG 5710 / NBRC 13948 / NRRL B-527 / VKM B-1787 / 2291 / W).